A 470-amino-acid polypeptide reads, in one-letter code: Putative multidrug resistance protein MdtD (470 aa).

At M1 to Q11 the chain is on the periplasmic side. The chain crosses the membrane as a helical span at residues L12–A32. Over L33–H48 the chain is Cytoplasmic. The helical transmembrane segment at M49–A69 threads the bilayer. Residues D70–N76 are Periplasmic-facing. A helical membrane pass occupies residues I77–T97. Residues L98 to L101 lie on the Cytoplasmic side of the membrane. Residues V102–M124 traverse the membrane as a helical segment. Residues K125–T137 lie on the Periplasmic side of the membrane. Residues F138–V158 form a helical membrane-spanning segment. Over E159–H164 the chain is Cytoplasmic. A helical membrane pass occupies residues W165–M185. The Periplasmic portion of the chain corresponds to P186–D196. A helical transmembrane segment spans residues L197–S217. Over K218 to P224 the chain is Cytoplasmic. The chain crosses the membrane as a helical span at residues W225–A245. At K246–T262 the chain is on the periplasmic side. Residues F263–M283 form a helical membrane-spanning segment. The Cytoplasmic segment spans residues T284–P285. The chain crosses the membrane as a helical span at residues V286–M306. The Periplasmic segment spans residues V307–S341. The helical transmembrane segment at L342–L362 threads the bilayer. Topologically, residues Q363–S395 are cytoplasmic. A helical membrane pass occupies residues M396–F416. The Periplasmic portion of the chain corresponds to G417 to H430. A helical transmembrane segment spans residues V431–A451. Residues R452–L470 lie on the Cytoplasmic side of the membrane.

The protein belongs to the major facilitator superfamily. TCR/Tet family.

The protein resides in the cell inner membrane. This Salmonella typhimurium (strain LT2 / SGSC1412 / ATCC 700720) protein is Putative multidrug resistance protein MdtD.